The following is a 326-amino-acid chain: Probable protein phosphatase 2C 61 (326 aa).

The PPM-type phosphatase domain maps to 42–316 (LGSVSSLAGG…DDISVVCLSL (275 aa)). Mn(2+) is bound by residues aspartate 77, glycine 78, aspartate 261, and aspartate 307.

This sequence belongs to the PP2C family. Requires Mg(2+) as cofactor. Mn(2+) is required as a cofactor.

The catalysed reaction is O-phospho-L-seryl-[protein] + H2O = L-seryl-[protein] + phosphate. The enzyme catalyses O-phospho-L-threonyl-[protein] + H2O = L-threonyl-[protein] + phosphate. This is Probable protein phosphatase 2C 61 from Arabidopsis thaliana (Mouse-ear cress).